Here is a 376-residue protein sequence, read N- to C-terminus: Cytoplasmic tRNA 2-thiolation protein 1 (376 aa).

It belongs to the TtcA family. CTU1/NCS6/ATPBD3 subfamily.

Its subcellular location is the cytoplasm. Its pathway is tRNA modification; 5-methoxycarbonylmethyl-2-thiouridine-tRNA biosynthesis. Plays a central role in 2-thiolation of mcm(5)S(2)U at tRNA wobble positions of tRNA(Lys), tRNA(Glu) and tRNA(Gln). Directly binds tRNAs and probably acts by catalyzing adenylation of tRNAs, an intermediate required for 2-thiolation. It is unclear whether it acts as a sulfurtransferase that transfers sulfur from thiocarboxylated URM1 onto the uridine of tRNAs at wobble position. Prior mcm(5) tRNA modification by the elongator complex is required for 2-thiolation. May also be involved in protein urmylation. The protein is Cytoplasmic tRNA 2-thiolation protein 1 of Scheffersomyces stipitis (strain ATCC 58785 / CBS 6054 / NBRC 10063 / NRRL Y-11545) (Yeast).